A 303-amino-acid chain; its full sequence is L(+)-tartrate dehydratase subunit alpha (303 aa).

Residues cysteine 71, cysteine 190, and cysteine 277 each contribute to the iron-sulfur cluster site.

It belongs to the class-I fumarase family. As to quaternary structure, tetramer of two alpha and two beta subunits. Iron-sulfur cluster serves as cofactor.

It carries out the reaction (2R,3R)-tartrate = oxaloacetate + H2O. This chain is L(+)-tartrate dehydratase subunit alpha (ttdA), found in Escherichia coli O6:H1 (strain CFT073 / ATCC 700928 / UPEC).